The primary structure comprises 112 residues: Integration host factor subunit alpha (112 aa).

The protein belongs to the bacterial histone-like protein family. As to quaternary structure, heterodimer of an alpha and a beta chain.

This protein is one of the two subunits of integration host factor, a specific DNA-binding protein that functions in genetic recombination as well as in transcriptional and translational control. The protein is Integration host factor subunit alpha of Rhizobium rhizogenes (strain K84 / ATCC BAA-868) (Agrobacterium radiobacter).